Here is an 814-residue protein sequence, read N- to C-terminus: Dimethyl sulfoxide reductase DmsA (814 aa).

Residues 1 to 45 (MKTKIPDAVLAAEVSRRGLVKTTAIGGLAMASSALTLPFSRIAHA) constitute a signal peptide (tat-type signal). The 4Fe-4S Mo/W bis-MGD-type domain occupies 56-118 (EKVIWSACTV…SMRRRVYNPD (63 aa)). [4Fe-4S] cluster-binding residues include C63, C67, C71, and C104. Residues 172–176 (LGGTM), S205, 244–245 (ET), 270–271 (ID), 291–293 (GTD), 386–387 (WG), R390, N488, 512–513 (ID), H701, 707–709 (HST), N788, and 804–805 (SH) contribute to the Mo-bis(molybdopterin guanine dinucleotide) site.

The protein belongs to the prokaryotic molybdopterin-containing oxidoreductase family. In terms of assembly, heterotrimeric enzyme composed of a catalytic heterodimer (DmsAB) and a membrane anchor protein (DmsC). It depends on [4Fe-4S] cluster as a cofactor. Mo-bis(molybdopterin guanine dinucleotide) is required as a cofactor. In terms of processing, exported by the Tat system. The position of the signal peptide cleavage has been experimentally proven. Can also be exported by the Sec system.

Its subcellular location is the cell membrane. It carries out the reaction dimethyl sulfide + a menaquinone + H2O = dimethyl sulfoxide + a menaquinol. Its activity is regulated as follows. Inhibited by dithionite, sodium hydrogensulfite and tungstate. Its function is as follows. Catalyzes the reduction of dimethyl sulfoxide (DMSO) to dimethyl sulfide (DMS). DMSO reductase serves as the terminal reductase under anaerobic conditions, with DMSO being the terminal electron acceptor. Terminal reductase during anaerobic growth on various sulfoxides and N-oxide compounds. Allows E.coli to grow anaerobically on DMSO as respiratory oxidant. In Escherichia coli (strain K12), this protein is Dimethyl sulfoxide reductase DmsA (dmsA).